A 362-amino-acid polypeptide reads, in one-letter code: Aminomethyltransferase (362 aa).

Belongs to the GcvT family. As to quaternary structure, the glycine cleavage system is composed of four proteins: P, T, L and H.

The catalysed reaction is N(6)-[(R)-S(8)-aminomethyldihydrolipoyl]-L-lysyl-[protein] + (6S)-5,6,7,8-tetrahydrofolate = N(6)-[(R)-dihydrolipoyl]-L-lysyl-[protein] + (6R)-5,10-methylene-5,6,7,8-tetrahydrofolate + NH4(+). Functionally, the glycine cleavage system catalyzes the degradation of glycine. This Chromobacterium violaceum (strain ATCC 12472 / DSM 30191 / JCM 1249 / CCUG 213 / NBRC 12614 / NCIMB 9131 / NCTC 9757 / MK) protein is Aminomethyltransferase.